Consider the following 91-residue polypeptide: Ragulator complex protein LAMTOR5 homolog (91 aa).

The protein belongs to the LAMTOR5 family. In terms of assembly, part of the Ragulator complex.

The protein resides in the cytoplasm. Its subcellular location is the lysosome. Functionally, regulator of the TOR pathway, a signaling cascade that promotes cell growth in response to growth factors, energy levels, and amino acids. As part of the Ragulator complex, may activate the TOR signaling cascade in response to amino acids. This Nematostella vectensis (Starlet sea anemone) protein is Ragulator complex protein LAMTOR5 homolog.